The chain runs to 441 residues: Lysine histidine transporter 2 (441 aa).

Topologically, residues 1–32 are cytoplasmic; that stretch reads MGNSEMSASEVAAAKQKNVDDWLPITSSRNAK. Residues 33 to 53 form a helical membrane-spanning segment; the sequence is WWYSAFHNVTAMVGAGVLSLP. Topologically, residues 54–58 are extracellular; the sequence is YAMSN. A helical transmembrane segment spans residues 59 to 79; it reads LGWGPGVTIMVMSWIITLYTL. The Cytoplasmic segment spans residues 80 to 110; sequence WQMVEMHEIVPGKRLDRYHELGQHAFGEKLG. The helical transmembrane segment at 111-131 threads the bilayer; that stretch reads LWIVVPQQLIVEVGVDIVYMV. Over 132–152 the chain is Extracellular; the sequence is TGGASLKKVHQLVCPDCKEIR. Residues 153–173 traverse the membrane as a helical segment; the sequence is TTFWIMIFASVHFVISHLPNF. Topologically, residues 174-175 are cytoplasmic; that stretch reads NS. Residues 176 to 196 traverse the membrane as a helical segment; sequence ISIISLAAAVMSLTYSTIAWA. Residues 197 to 222 are Extracellular-facing; it reads ASVHKGVHPDVDYSPRASTDVGKVFN. Residues 223–243 traverse the membrane as a helical segment; that stretch reads FLNALGDVAFAYAGHNVVLEI. The Cytoplasmic portion of the chain corresponds to 244 to 263; that stretch reads QATIPSTPEMPSKVPMWRGV. The helical transmembrane segment at 264-284 threads the bilayer; that stretch reads IVAYIVVAICYFPVAFLGYYI. Residues 285-300 are Extracellular-facing; it reads FGNSVDDNILITLEKP. The chain crosses the membrane as a helical span at residues 301–321; that stretch reads IWLIAMANMFVVIHVIGSYQI. Residues 322 to 347 are Cytoplasmic-facing; the sequence is FAMPVFDMLETVLVKKMNFNPSFKLR. The helical transmembrane segment at 348-370 threads the bilayer; that stretch reads FITRSLYVAFTMIVAICVPFFGG. At 371-373 the chain is on the extracellular side; sequence LLG. A helical transmembrane segment spans residues 374-396; the sequence is FFGGFAFAPTTYYLPCIMWLVLK. Residues 397 to 406 are Cytoplasmic-facing; it reads KPKRFGLSWT. Residues 407–427 traverse the membrane as a helical segment; that stretch reads ANWFCIIVGVLLTILAPIGGL. The Extracellular segment spans residues 428 to 441; it reads RTIIINAKTYKFFS.

The protein belongs to the amino acid/polyamine transporter 2 family. Amino acid/auxin permease (AAAP) (TC 2.A.18.2) subfamily. As to expression, expressed in flower buds and to lower levels in leaves and stems. Not detected in roots and siliques. Restricted to the tapetum cell layer.

It localises to the cell membrane. Inhibited by diethylstibestrol (DES), 2,4-dinitrophenol (DNP) and carbonlycyanide m-chlorophenylhydrazone (CCCP). Functionally, amino acid-proton symporter. Transporter with a broad specificity for neutral and acidic amino acids. Basic amino acids are only marginally transported. Involved in import of amino acids into the tapetum cells for synthesis of compounds important for microspore structure. The sequence is that of Lysine histidine transporter 2 (LHT2) from Arabidopsis thaliana (Mouse-ear cress).